An 87-amino-acid polypeptide reads, in one-letter code: MKIILWLCVFGLFLATLFPISWQMPVESGLSSEDSASSESFASKIKRHGEGTFTSDLSKQMEEEAVRLFIEWLKNGGPSSGAPPPSG.

The signal sequence occupies residues 1–23 (MKIILWLCVFGLFLATLFPISWQ). The propeptide occupies 24–45 (MPVESGLSSEDSASSESFASKI). Ser86 is modified (serine amide).

This sequence belongs to the glucagon family. As to expression, expressed by the venom gland.

The protein localises to the secreted. Functionally, venom protein that mimics the incretin hormone glucagon-like peptide 1 (GLP-1). It stimulates insulin synthesis and secretion, protects against beta-cell apoptosis in response to different insults, and promotes beta-cell proliferation It also promotes satiety, reduces food intake, reduces fat deposition, reduces body weight and inhibits gastric emptying. Interacts with GLP-1 receptor (GLP1R). Induces hypotension that is mediated by relaxation of cardiac smooth muscle. The sequence is that of Exendin-4 from Heloderma suspectum cinctum (Banded Gila monster).